A 227-amino-acid chain; its full sequence is Octanoyltransferase (227 aa).

In terms of domain architecture, BPL/LPL catalytic spans 43–218; it reads ADSQDELWIV…TFTKTLGYQE (176 aa). Substrate is bound by residues 82-89, 149-151, and 162-164; these read RGGQVTYH, SLG, and GLA. The Acyl-thioester intermediate role is filled by cysteine 180.

Belongs to the LipB family.

It is found in the cytoplasm. It catalyses the reaction octanoyl-[ACP] + L-lysyl-[protein] = N(6)-octanoyl-L-lysyl-[protein] + holo-[ACP] + H(+). The protein operates within protein modification; protein lipoylation via endogenous pathway; protein N(6)-(lipoyl)lysine from octanoyl-[acyl-carrier-protein]: step 1/2. Its function is as follows. Catalyzes the transfer of endogenously produced octanoic acid from octanoyl-acyl-carrier-protein onto the lipoyl domains of lipoate-dependent enzymes. Lipoyl-ACP can also act as a substrate although octanoyl-ACP is likely to be the physiological substrate. This is Octanoyltransferase from Shewanella denitrificans (strain OS217 / ATCC BAA-1090 / DSM 15013).